The sequence spans 256 residues: POU domain class 2-associating factor 1 (256 aa).

Positions 1–24 (MLWQKSTAPEQAPAPPRPYQGVRV) are disordered. Residues 16–38 (PRPYQGVRVKEPVKELLRRKRGH) enclose the OCA domain.

The protein belongs to the POU2AF family. In terms of assembly, interacts with POU2F1/OCT1 and POU2F2/OCT2; the interaction increases POU2F1 and POU2F2 transactivation activity. Post-translationally, ubiquitinated; mediated by SIAH1 or SIAH2 and leading to its subsequent proteasomal degradation. In terms of tissue distribution, B-cell specific.

It localises to the nucleus. Functionally, transcriptional coactivator that specifically associates with either POU2F1/OCT1 or POU2F2/OCT2. It boosts the POU2F1/OCT1 mediated promoter activity and to a lesser extent, that of POU2F2/OCT2. It recognizes the POU domains of POU2F1/OCT1 and POU2F2/OCT2. It is essential for the response of B-cells to antigens and required for the formation of germinal centers. Regulates IL6 expression in B cells as POU2F2/OCT2 coactivator. The chain is POU domain class 2-associating factor 1 from Mus musculus (Mouse).